Here is a 379-residue protein sequence, read N- to C-terminus: Chaperone protein DnaJ (379 aa).

Residues 5 to 70 (DYYETLGCDR…QKRAAYDRFG (66 aa)) enclose the J domain. A CR-type zinc finger spans residues 134-212 (GKTAQIKIPT…CGGAGRVTRE (79 aa)). Zn(2+) is bound by residues Cys147, Cys150, Cys164, Cys167, Cys186, Cys189, Cys200, and Cys203. CXXCXGXG motif repeat units follow at residues 147 to 154 (CETCSGTG), 164 to 171 (CRMCGGAG), 186 to 193 (CPNCQGRG), and 200 to 207 (CSDCGGAG).

It belongs to the DnaJ family. As to quaternary structure, homodimer. Zn(2+) serves as cofactor.

Its subcellular location is the cytoplasm. Functionally, participates actively in the response to hyperosmotic and heat shock by preventing the aggregation of stress-denatured proteins and by disaggregating proteins, also in an autonomous, DnaK-independent fashion. Unfolded proteins bind initially to DnaJ; upon interaction with the DnaJ-bound protein, DnaK hydrolyzes its bound ATP, resulting in the formation of a stable complex. GrpE releases ADP from DnaK; ATP binding to DnaK triggers the release of the substrate protein, thus completing the reaction cycle. Several rounds of ATP-dependent interactions between DnaJ, DnaK and GrpE are required for fully efficient folding. Also involved, together with DnaK and GrpE, in the DNA replication of plasmids through activation of initiation proteins. This Xanthobacter autotrophicus (strain ATCC BAA-1158 / Py2) protein is Chaperone protein DnaJ.